The chain runs to 1960 residues: [F-actin]-monooxygenase MICAL3 (1960 aa).

The segment at 2-494 (EESKNEATNR…RHLYDTGDTK (493 aa)) is monooxygenase domain. FAD-binding positions include C97, 116 to 118 (EKR), 123 to 125 (RNN), F183, Y298, and D398. The region spanning 518–624 (VARSSKLLGW…YLTQFYEMFK (107 aa)) is the Calponin-homology (CH) domain. S649 bears the Phosphoserine mark. The disordered stretch occupies residues 658 to 704 (GQTISRKRSPKDKKEKDLDGAGKRRKTSQSEEEDTPRGHRGARPTLV). A compositionally biased stretch (basic and acidic residues) spans 669-679 (DKKEKDLDGAG). S685 and S687 each carry phosphoserine. Residues 762 to 824 (DTCYFCQKRV…KPHYCYRLSG (63 aa)) enclose the LIM zinc-binding domain. 8 residues coordinate Zn(2+): C764, C767, H785, C788, C791, C794, C814, and H817. 2 disordered regions span residues 826–887 (AQRK…LRGT) and 906–1295 (LEEV…EALK). Phosphothreonine is present on T887. S971 bears the Phosphoserine mark. Positions 984–1014 (GEEEEEDEEDEEEEEEEEDEEDEEEDEDESS) are enriched in acidic residues. Basic and acidic residues-rich tracts occupy residues 1039–1051 (HWTHIRESQEERA) and 1072–1084 (DVDSEPAEIKGEA). A phosphoserine mark is found at S1129, S1139, S1156, and S1188. 2 stretches are compositionally biased toward pro residues: residues 1192–1203 (SPLPEPSTPPAE) and 1217–1233 (RTPPSPASPQRPSPPTQ). Position 1250 is a phosphoserine (S1250). T1252 carries the post-translational modification Phosphothreonine. S1254, S1286, and S1313 each carry phosphoserine. Over residues 1277–1286 (QGVTKDTLGS) the composition is skewed to polar residues. Disordered stretches follow at residues 1316-1550 (LTPV…KRGL) and 1564-1782 (RMRA…EEEL). Residue T1317 is modified to Phosphothreonine. Over residues 1379 to 1393 (PDREPKGPREEHRDL) the composition is skewed to basic and acidic residues. The segment covering 1394 to 1406 (SSSSGLGLQGSSS) has biased composition (low complexity). S1404 is modified (phosphoserine). Positions 1407-1425 (RTRTPGSQSFNTSDSTMLT) are enriched in polar residues. Position 1425 is a phosphothreonine (T1425). Acidic residues predominate over residues 1485–1503 (SVDEIPFADDVEDTYDDNT). Over residues 1594–1611 (AAAAPRTPRTPAPRRATA) the composition is skewed to low complexity. The segment covering 1616–1627 (GPEEPAPRHEAT) has biased composition (basic and acidic residues). A compositionally biased stretch (low complexity) spans 1633–1653 (SPPSDSGGPDGSVTSSEGSSG). The span at 1654 to 1672 (KSKKRSSLFSPRRSKKEKK) shows a compositional bias: basic residues. Phosphoserine is present on residues S1660 and S1663. Polar residues predominate over residues 1718–1727 (CPSTPSSGTT). Positions 1762–1778 (VLERTSQKSRKEPRTYT) are enriched in basic and acidic residues. Residues 1779 to 1952 (EEELNAKLTR…DKDLEAAMLS (174 aa)) are a coiled coil. A bMERB domain is found at 1799–1948 (KQEELKRLHR…EKEEDKDLEA (150 aa)). A Phosphoserine modification is found at S1870.

It belongs to the Mical family. Interacts with RAB1B, RAB8A, RAB10, RAB13 and RAB15 (in their GTP-bound forms); binding to RAB1B is of low affinity compared to other Rab proteins; at least in case of RAB8A can bind 2 molecules of RAB8A simultaneously through a high and a low affinity binding site, respectively. Interacts with ERC1 and RAB8A; may bridge ERC1 with RAB8A. Interacts with KIF23 and ERC1; enhances the interaction between KIF23 and ERC1. Interacts with NINL. It depends on FAD as a cofactor.

The protein resides in the cytoplasm. It is found in the cell cortex. The protein localises to the cytoskeleton. It localises to the nucleus. Its subcellular location is the midbody. The protein resides in the spindle. It is found in the cilium basal body. The enzyme catalyses L-methionyl-[F-actin] + NADPH + O2 + H(+) = L-methionyl-(R)-S-oxide-[F-actin] + NADP(+) + H2O. Its function is as follows. Monooxygenase that promotes depolymerization of F-actin by mediating oxidation of specific methionine residues on actin to form methionine-sulfoxide, resulting in actin filament disassembly and preventing repolymerization. In the absence of actin, it also functions as a NADPH oxidase producing H(2)O(2). Seems to act as Rab effector protein and play a role in vesicle trafficking. Involved in exocytic vesicles tethering and fusion: the monooxygenase activity is required for this process and implicates RAB8A associated with exocytotic vesicles. Required for cytokinesis. Contributes to stabilization and/or maturation of the intercellular bridge independently of its monooxygenase activity. Promotes recruitment of Rab8 and ERC1 to the intercellular bridge, and together these proteins are proposed to function in timely abscission. In Bos taurus (Bovine), this protein is [F-actin]-monooxygenase MICAL3 (MICAL3).